The following is a 249-amino-acid chain: uncharacterized protein (249 aa).

The segment covering 51–67 has biased composition (polar residues); sequence IPKDSLTNGKSSKNCMS. Disordered regions lie at residues 51–131 and 205–240; these read IPKD…DSPV and YLNASLSEDDTDSIVGTDYSEEEKESISETESSSDG. Positions 93–106 are enriched in low complexity; it reads SFQSMNSSMSSSTQ. Residues 110–129 are compositionally biased toward basic and acidic residues; that stretch reads RILDEKNKDQSSSNENDRDS.

It belongs to the asfivirus DP238L family.

This is an uncharacterized protein from African swine fever virus (isolate Tick/Malawi/Lil 20-1/1983) (ASFV).